Reading from the N-terminus, the 594-residue chain is Shugoshin (594 aa).

The stretch at 38 to 61 (KITDMETKVSELVQENVSLRSRLS) forms a coiled coil. 4 disordered regions span residues 104 to 178 (SGIH…KSSR), 201 to 266 (QLPI…TNKN), 342 to 380 (SKIK…RRTR), and 519 to 549 (TKQQ…RTKQ). The stretch at 220–240 (EEESQENKHTKEEREDEGKEN) forms a coiled coil. Basic and acidic residues predominate over residues 224 to 239 (QENKHTKEEREDEGKE). A compositionally biased stretch (polar residues) spans 252–261 (SVTNTGTECS). Basic residues predominate over residues 343 to 355 (KIKHSMKHPRTKL). The segment covering 357 to 376 (GGQDDIMPHTDYDKDDEKRE) has biased composition (basic and acidic residues). Composition is skewed to polar residues over residues 519–532 (TKQQ…SDPN) and 539–549 (NSNVKPTRTKQ).

The protein belongs to the shugoshin family.

Its subcellular location is the nucleus. The protein resides in the chromosome. The protein localises to the centromere. Functionally, plays a central role in chromosome cohesion during cell division by preventing premature dissociation of cohesin complex from centromeres after prophase, when most of cohesin complex dissociates from chromosomes arms. The sequence is that of Shugoshin (SGO1) from Kluyveromyces lactis (strain ATCC 8585 / CBS 2359 / DSM 70799 / NBRC 1267 / NRRL Y-1140 / WM37) (Yeast).